The chain runs to 349 residues: MTSSADSGRDAAWLDDFLALTLAGDAPPAEAGECAARAVRWRWLGDGLLRLEPADAAQRMQSVLVSAGVHGDETAPIELLSTLVRDIARGALPLRCRLLVALGNPGAMRAGERYLDDDLNRLFGGRHAQLAASREAPRAAQLEAAAALFFSTAGRARGARWHIDMHTAIRTSVFEQFALLPHTGEPPTRTMFEWLGEAQIAAVLLHTTKGSTFSHFTAQACGALACTLELGKVMPFGANDLSRFAPADAAVRRLVSGRRDAPRGALPRAFTVVDQITKQSDALELFVANDVPNFTPFARGTLLARDGDYRYAVRHEQERIVFPNPSVKPGLRAGLLVIETTRDTHAALA.

Histidine 70, glutamate 73, and histidine 166 together coordinate Zn(2+). Residue glutamate 229 is part of the active site.

Belongs to the AspA/AstE family. Succinylglutamate desuccinylase subfamily. Zn(2+) is required as a cofactor.

The enzyme catalyses N-succinyl-L-glutamate + H2O = L-glutamate + succinate. Its pathway is amino-acid degradation; L-arginine degradation via AST pathway; L-glutamate and succinate from L-arginine: step 5/5. Transforms N(2)-succinylglutamate into succinate and glutamate. The protein is Succinylglutamate desuccinylase of Burkholderia mallei (strain ATCC 23344).